We begin with the raw amino-acid sequence, 417 residues long: GPI mannosyltransferase 2 (417 aa).

The next 9 membrane-spanning stretches (helical) occupy residues 10–30 (FLII…LVWL), 104–124 (IVLK…WIVY), 142–162 (LALT…LISV), 167–187 (IAFT…SFDV), 206–226 (FCFA…LFYV), 239–259 (ITSI…FVYF), 312–332 (IPNF…ITYF), 344–364 (YIWI…VQII), and 394–414 (YYVM…ACFL).

Belongs to the PIGV family.

Its subcellular location is the endoplasmic reticulum membrane. Its pathway is glycolipid biosynthesis; glycosylphosphatidylinositol-anchor biosynthesis. Its function is as follows. Mannosyltransferase involved in glycosylphosphatidylinositol-anchor biosynthesis. Transfers the second mannose to the glycosylphosphatidylinositol during GPI precursor assembly. This chain is GPI mannosyltransferase 2 (GPI18), found in Kluyveromyces lactis (strain ATCC 8585 / CBS 2359 / DSM 70799 / NBRC 1267 / NRRL Y-1140 / WM37) (Yeast).